Consider the following 1199-residue polypeptide: AP-3 complex subunit delta-1 (1199 aa).

At A2 the chain carries N-acetylalanine. 9 HEAT repeats span residues 34-71 (KYIS…LGYD), 142-179 (DLAR…KYPE), 180-216 (SLRP…RNPK), 218-254 (YLSL…LEPR), 257-296 (KKLI…GMPN), 298-336 (SASI…THPK), 337-373 (SVQS…KKNL), 375-409 (EIVK…QSNY), and 521-558 (VYVQ…ERLP). Disordered regions lie at residues 623–695 (LDAW…RYQD) and 724–963 (YVKL…EPIP). S632, S634, and S636 each carry phosphoserine. Composition is skewed to basic and acidic residues over residues 639–651 (EKPK…EEPR) and 665–675 (LARRREARKQE). The stretch at 659 to 679 (EEDEEELARRREARKQEQANN) forms a coiled coil. A Phosphoserine modification is found at S688. The stretch at 722–750 (DQYVKLEEQRRHRQRLEKDKKRKKKEKGK) forms a coiled coil. Positions 732-754 (RHRQRLEKDKKRKKKEKGKRRHS) are enriched in basic residues. Phosphoserine is present on residues S754 and S755. T758 is modified (phosphothreonine). S760, S784, and S825 each carry phosphoserine. The segment covering 773–790 (ITEEMPENALPSDEDDKD) has biased composition (acidic residues). Positions 791–836 (PNDPYRALDIDLDKPLADSEKLPVQKHRNAEAVKSPEKEGVLGVEK) are enriched in basic and acidic residues. Basic residues predominate over residues 837 to 846 (KSKKPKKKEK). Residues 843–863 (KKEKKTKEREREKKDKKGEDL) adopt a coiled-coil conformation. The span at 847 to 862 (KTKEREREKKDKKGED) shows a compositional bias: basic and acidic residues. The span at 870 to 880 (TPPPAAAPIPA) shows a compositional bias: pro residues. Basic and acidic residues predominate over residues 894–916 (PKDECEVLKGEEEDHVDHDQERK). The stretch at 911–934 (HDQERKSSRHKKKKHRKEKEKEER) forms a coiled coil. Residues 917–928 (SSRHKKKKHRKE) show a composition bias toward basic residues.

This sequence belongs to the adaptor complexes large subunit family. As to quaternary structure, adaptor protein complex 3 (AP-3) is a heterotetramer composed of two large adaptins (delta-type subunit AP3D1 and beta-type subunit AP3B1 or AP3B2), a medium adaptin (mu-type subunit AP3M1 or AP3M2) and a small adaptin (sigma-type subunit APS1 or AP3S2). AP-3 associates with the BLOC-1 complex. Interacts with SLC30A2. Interacts with CLN3 (via dileucine motif); this interaction facilitates lysosomal targeting.

Its subcellular location is the cytoplasm. The protein localises to the golgi apparatus membrane. Its function is as follows. Part of the AP-3 complex, an adaptor-related complex which is not clathrin-associated. The complex is associated with the Golgi region as well as more peripheral structures. It facilitates the budding of vesicles from the Golgi membrane and may be directly involved in trafficking to lysosomes. Involved in process of CD8+ T-cell and NK cell degranulation. In concert with the BLOC-1 complex, AP-3 is required to target cargos into vesicles assembled at cell bodies for delivery into neurites and nerve terminals. The chain is AP-3 complex subunit delta-1 (Ap3d1) from Mus musculus (Mouse).